The following is a 535-amino-acid chain: Probable inorganic phosphate transporter 1-7 (535 aa).

Residues 1 to 24 (MAGDQLNVLNALDVAKTQWYHFTA) lie on the Cytoplasmic side of the membrane. Residues 25–45 (IIIAGMGFFTDAYDLFCISLV) traverse the membrane as a helical segment. At 46–70 (TKLLGRIYYHVDGSEKPGTLPPNVS) the chain is on the extracellular side. A helical transmembrane segment spans residues 71-91 (AAVNGVAFCGTLAGQLFFGWL). At 92-99 (GDKLGRKK) the chain is on the cytoplasmic side. Residues 100-120 (VYGMTLMVMVLCSIASGLSFG) traverse the membrane as a helical segment. The Extracellular portion of the chain corresponds to 121-131 (SNPKTVMTTLC). Residues 132-152 (FFRFWLGFGIGGDYPLSATIM) traverse the membrane as a helical segment. The Cytoplasmic portion of the chain corresponds to 153–161 (SEYANKKTR). The chain crosses the membrane as a helical span at residues 162 to 182 (GAFIAAVFAMQGFGILTGGIF). The Extracellular segment spans residues 183-211 (AIIVSAAFEAKFPAPTYQIDALASTVPQA). Residues 212-232 (DYVWRIILMVGALPAAMTYYS) traverse the membrane as a helical segment. Topologically, residues 233-289 (RSKMPETARYTALVAKDAKLAASNMSKVLQVEIEAEQQGTEDKSNSFGLFSKEFMKR) are cytoplasmic. Residues 290 to 310 (HGLHLLGTTSTWFLLDIAFYS) traverse the membrane as a helical segment. The Extracellular segment spans residues 311–345 (QNLFQKDIFSAIGWIPPAQTMNAIQEVFKIARAQT). Residues 346-366 (LIALCSTVPGYWFTVAFIDVI) traverse the membrane as a helical segment. Residues 367–368 (GR) are Cytoplasmic-facing. The chain crosses the membrane as a helical span at residues 369–389 (FAIQMMGFFFMTVFMFALAIP). The Extracellular segment spans residues 390–399 (YDHWTHKENR). A helical transmembrane segment spans residues 400 to 420 (IGFVAMYSLTFFFANFGPNAT). Residues 421 to 438 (TFVVPAEIFPARFRSTCH) are Cytoplasmic-facing. Residues 439–459 (GISAASGKLGAMVGAFGFLYL) form a helical membrane-spanning segment. The Extracellular portion of the chain corresponds to 460 to 480 (AQSPDKTKTEHGYPPGIGVKN). The helical transmembrane segment at 481-501 (SLIVLGVVNLLGMVFTLLVPE) threads the bilayer. At 502–535 (SKGKSLEEMSGENEQNDESSSSSNNNSNNAVSTA) the chain is on the cytoplasmic side. The disordered stretch occupies residues 506 to 535 (SLEEMSGENEQNDESSSSSNNNSNNAVSTA). Residues 519-535 (ESSSSSNNNSNNAVSTA) are compositionally biased toward low complexity. Phosphoserine is present on serine 520.

Belongs to the major facilitator superfamily. Phosphate:H(+) symporter (TC 2.A.1.9) family. As to expression, mature pollen.

The protein resides in the membrane. In terms of biological role, high-affinity transporter for external inorganic phosphate. The polypeptide is Probable inorganic phosphate transporter 1-7 (PHT1-7) (Arabidopsis thaliana (Mouse-ear cress)).